The primary structure comprises 128 residues: Large ribosomal subunit protein bL12 (128 aa).

The protein belongs to the bacterial ribosomal protein bL12 family. In terms of assembly, homodimer. Part of the ribosomal stalk of the 50S ribosomal subunit. Forms a multimeric L10(L12)X complex, where L10 forms an elongated spine to which 2 to 4 L12 dimers bind in a sequential fashion. Binds GTP-bound translation factors.

Forms part of the ribosomal stalk which helps the ribosome interact with GTP-bound translation factors. Is thus essential for accurate translation. This chain is Large ribosomal subunit protein bL12, found in Synechococcus sp. (strain CC9311).